The sequence spans 80 residues: SPI-1 type 3 secretion system needle filament protein (80 aa).

Belongs to the SctF family. As to quaternary structure, the core secretion machinery of the T3SS is composed of approximately 20 different proteins, including cytoplasmic components, a base, an export apparatus and a needle. This subunit polymerizes and forms the helical needle filament. Interacts with the needle tip protein SipD/SctA. Interacts with the needle adapter protein PrgJ/SctI, the secretin InvG/SctC and the minor export apparatus protein SpaP/SctR. In vitro, the needle protomer refolds spontaneously to extend the needle from the distal end.

The protein resides in the secreted. The protein localises to the cell surface. Its activity is regulated as follows. Binding of bile salts, including deoxycholate, to the PrgI:SipD interface may inhibit the T3SS function. In terms of biological role, component of the type III secretion system (T3SS), also called injectisome, which is used to inject bacterial effector proteins into eukaryotic host cells. PrgI/SctF1 forms the external needle filament that protrudes from the bacterial surface. Is probably involved in the transduction of an activating signal, thought to be mediated by the distal tip of the needle filament, to the secretion machine. Required for invasion of epithelial cells. Required for the secretion of the effector protein SptP. During infection, can induce innate immune responses. The needle proteins interact with host TLR2 or TLR4, and induce signaling by NF-kappa-B and/or AP-1. This activation is MyD88 dependent and results in increased expression of cytokines, including TNF-alpha, IL-6 and IL-8. This is SPI-1 type 3 secretion system needle filament protein from Salmonella typhimurium (strain LT2 / SGSC1412 / ATCC 700720).